Consider the following 336-residue polypeptide: Mitochondrial amidoxime reducing component 2 (336 aa).

A mitochondrion-targeting transit peptide spans 1–35 (MGAAGSSALARLGLPALPGPRWLGVAALGLAAVAL). Residues Lys138, Lys144, Lys173, Lys187, Lys287, and Lys294 each participate in a glycyl lysine isopeptide (Lys-Gly) (interchain with G-Cter in ubiquitin) cross-link. The MOSC domain maps to 188 to 334 (ARASNEIFPS…LKVGDPVYQM (147 aa)).

In terms of assembly, component of a complex composed of cytochrome b5, NADH-cytochrome b5 reductase (CYB5R3) and MTARC2. Mo-molybdopterin is required as a cofactor. Ubiquitinated by PRKN during mitophagy, leading to its degradation and enhancement of mitophagy. Deubiquitinated by USP30.

The protein resides in the mitochondrion outer membrane. It is found in the peroxisome. The enzyme catalyses N(omega)-hydroxy-L-arginine + 2 Fe(II)-[cytochrome b5] + 2 H(+) = L-arginine + 2 Fe(III)-[cytochrome b5] + H2O. Functionally, catalyzes the reduction of N-oxygenated molecules, acting as a counterpart of cytochrome P450 and flavin-containing monooxygenases in metabolic cycles. As a component of prodrug-converting system, reduces a multitude of N-hydroxylated prodrugs particularly amidoximes, leading to increased drug bioavailability. May be involved in mitochondrial N(omega)-hydroxy-L-arginine (NOHA) reduction, regulating endogenous nitric oxide levels and biosynthesis. Postulated to cleave the N-OH bond of N-hydroxylated substrates in concert with electron transfer from NADH to cytochrome b5 reductase then to cytochrome b5, the ultimate electron donor that primes the active site for substrate reduction. The sequence is that of Mitochondrial amidoxime reducing component 2 (MTARC2) from Bos taurus (Bovine).